Reading from the N-terminus, the 314-residue chain is Glutathione synthetase (314 aa).

In terms of domain architecture, ATP-grasp spans 125–309 (KLFVMNFPQL…VAAKVWDTIE (185 aa)). 151–207 (RDKHGAVVMKPLHGHGGAAVFRVMPQDMNFGSLFDMFTVTFKEPWVIQQFIPEVKHG) is a binding site for ATP. E280 and N282 together coordinate Mg(2+).

The protein belongs to the prokaryotic GSH synthase family. The cofactor is Mg(2+). Mn(2+) is required as a cofactor.

The enzyme catalyses gamma-L-glutamyl-L-cysteine + glycine + ATP = glutathione + ADP + phosphate + H(+). Its pathway is sulfur metabolism; glutathione biosynthesis; glutathione from L-cysteine and L-glutamate: step 2/2. This Bradyrhizobium diazoefficiens (strain JCM 10833 / BCRC 13528 / IAM 13628 / NBRC 14792 / USDA 110) protein is Glutathione synthetase.